The primary structure comprises 194 residues: dITP/XTP pyrophosphatase (194 aa).

A substrate-binding site is contributed by 7–12 (SGNVNK). Glu38 and Asp67 together coordinate Mg(2+). The Proton acceptor role is filled by Asp67. Substrate is bound by residues Ser68, 151–154 (FGYD), Lys174, and 179–180 (HR).

It belongs to the HAM1 NTPase family. Homodimer. Mg(2+) is required as a cofactor.

The enzyme catalyses XTP + H2O = XMP + diphosphate + H(+). It catalyses the reaction dITP + H2O = dIMP + diphosphate + H(+). It carries out the reaction ITP + H2O = IMP + diphosphate + H(+). Functionally, pyrophosphatase that catalyzes the hydrolysis of nucleoside triphosphates to their monophosphate derivatives, with a high preference for the non-canonical purine nucleotides XTP (xanthosine triphosphate), dITP (deoxyinosine triphosphate) and ITP. Seems to function as a house-cleaning enzyme that removes non-canonical purine nucleotides from the nucleotide pool, thus preventing their incorporation into DNA/RNA and avoiding chromosomal lesions. This chain is dITP/XTP pyrophosphatase, found in Treponema denticola (strain ATCC 35405 / DSM 14222 / CIP 103919 / JCM 8153 / KCTC 15104).